The chain runs to 435 residues: Arginine biosynthesis bifunctional protein ArgJ, mitochondrial (435 aa).

Substrate contacts are provided by T167, K193, T204, E291, N430, and T435. T204 serves as the catalytic Nucleophile.

Belongs to the ArgJ family. As to quaternary structure, heterodimer of an alpha and a beta chain. Post-translationally, the alpha and beta chains are autoproteolytically processed from a single precursor protein within the mitochondrion.

The protein resides in the mitochondrion matrix. It carries out the reaction N(2)-acetyl-L-ornithine + L-glutamate = N-acetyl-L-glutamate + L-ornithine. The catalysed reaction is L-glutamate + acetyl-CoA = N-acetyl-L-glutamate + CoA + H(+). It participates in amino-acid biosynthesis; L-arginine biosynthesis; L-ornithine and N-acetyl-L-glutamate from L-glutamate and N(2)-acetyl-L-ornithine (cyclic): step 1/1. The protein operates within amino-acid biosynthesis; L-arginine biosynthesis; N(2)-acetyl-L-ornithine from L-glutamate: step 1/4. Its function is as follows. Catalyzes two activities which are involved in the cyclic version of arginine biosynthesis: the synthesis of acetylglutamate from glutamate and acetyl-CoA, and of ornithine by transacetylation between acetylornithine and glutamate. The polypeptide is Arginine biosynthesis bifunctional protein ArgJ, mitochondrial (Heterostelium pallidum (strain ATCC 26659 / Pp 5 / PN500) (Cellular slime mold)).